We begin with the raw amino-acid sequence, 374 residues long: All-trans-retinol dehydrogenase [NAD(+)] ADH7 (374 aa).

Residues C47, H68, C98, C101, C104, C112, and C174 each contribute to the Zn(2+) site. Residues 199–204, D223, K228, 292–294, and R369 contribute to the NAD(+) site; these read GLGGVG and VGA.

This sequence belongs to the zinc-containing alcohol dehydrogenase family. Class-IV subfamily. In terms of assembly, homodimer. Zn(2+) is required as a cofactor. In terms of tissue distribution, high expression in the stomach mucosa. Lower expression in eye, thymus, skin and ovary. Very low expression in small intestine, liver and uterus.

It is found in the cytoplasm. It catalyses the reaction a primary alcohol + NAD(+) = an aldehyde + NADH + H(+). It carries out the reaction 10-hydroxydecanoate + NAD(+) = 10-oxodecanoate + NADH + H(+). The enzyme catalyses all-trans-retinol + NAD(+) = all-trans-retinal + NADH + H(+). The catalysed reaction is 9-cis-retinol + NAD(+) = 9-cis-retinal + NADH + H(+). It catalyses the reaction all-trans-3,4-didehydroretinol + NAD(+) = all-trans-3,4-didehydroretinal + NADH + H(+). It carries out the reaction all-trans-4-hydroxyretinol + NAD(+) = all-trans-4-hydroxyretinal + NADH + H(+). The enzyme catalyses all-trans-4-oxoretinol + NAD(+) = all-trans-4-oxoretinal + NADH + H(+). The catalysed reaction is 12-hydroxydodecanoate + NAD(+) = 12-oxododecanoate + NADH + H(+). It catalyses the reaction 16-hydroxyhexadecanoate + NAD(+) = 16-oxohexadecanoate + NADH + H(+). It carries out the reaction hexan-1-ol + NAD(+) = hexanal + NADH + H(+). The enzyme catalyses (E)-hex-2-en-1-ol + NAD(+) = (E)-hex-2-enal + NADH + H(+). The catalysed reaction is (E)-4-hydroxynon-2-en-1-ol + NAD(+) = (E)-4-hydroxynon-2-enal + NADH + H(+). Retinol oxidation is inhibited by the detergent Tween 80. Ethanol inhibits both all-trans-retinol and 9-cis-retinol oxidation. 13-cis-retinol is an effective competitive inhibitor of the 9-cis-retinol oxidation. All-trans-retinoic acid is a powerful inhibitor of all-trans-retinol oxidation. 13-cis-retinoic acid is a powerful inhibitor of all-trans-retinol oxidation. Cimetidine competitively inhibited ethanol oxidation. Its function is as follows. Catalyzes the NAD-dependent oxidation of all-trans-retinol, alcohol, aldehyde and omega-hydroxy fatty acids and their derivatives. Oxidizes preferentially all trans-retinol, all-trans-4-hydroxyretinol, 9-cis-retinol, 2-hexenol, and long chain omega-hydroxy fatty acids such as juniperic acid. In vitro can also catalyze the NADH-dependent reduction of all-trans-retinal and aldehydes and their derivatives. Reduces preferentially all trans-retinal, all-trans-4-oxoretinal and hexanal. Catalyzes in the oxidative direction with higher efficiency. Therefore may participate in retinoid metabolism, fatty acid omega-oxidation, and elimination of cytotoxic aldehydes produced by lipid peroxidation. The protein is All-trans-retinol dehydrogenase [NAD(+)] ADH7 (Adh7) of Mus musculus (Mouse).